We begin with the raw amino-acid sequence, 352 residues long: UDP-N-acetylglucosamine--N-acetylmuramyl-(pentapeptide) pyrophosphoryl-undecaprenol N-acetylglucosamine transferase (352 aa).

UDP-N-acetyl-alpha-D-glucosamine is bound by residues Ser195 and Gln287.

Belongs to the glycosyltransferase 28 family. MurG subfamily.

Its subcellular location is the cell membrane. It catalyses the reaction Mur2Ac(oyl-L-Ala-gamma-D-Glu-L-Lys-D-Ala-D-Ala)-di-trans,octa-cis-undecaprenyl diphosphate + UDP-N-acetyl-alpha-D-glucosamine = beta-D-GlcNAc-(1-&gt;4)-Mur2Ac(oyl-L-Ala-gamma-D-Glu-L-Lys-D-Ala-D-Ala)-di-trans,octa-cis-undecaprenyl diphosphate + UDP + H(+). It functions in the pathway cell wall biogenesis; peptidoglycan biosynthesis. Cell wall formation. Catalyzes the transfer of a GlcNAc subunit on undecaprenyl-pyrophosphoryl-MurNAc-pentapeptide (lipid intermediate I) to form undecaprenyl-pyrophosphoryl-MurNAc-(pentapeptide)GlcNAc (lipid intermediate II). The polypeptide is UDP-N-acetylglucosamine--N-acetylmuramyl-(pentapeptide) pyrophosphoryl-undecaprenol N-acetylglucosamine transferase (Streptococcus pneumoniae serotype 19F (strain G54)).